Reading from the N-terminus, the 399-residue chain is uncharacterized protein (399 aa).

The interval 375–399 (AAGGHRGSHGKSEQAATVRVVDDRR) is disordered.

Belongs to the mycobacterial PPE family.

This is an uncharacterized protein from Mycobacterium tuberculosis (strain CDC 1551 / Oshkosh).